Here is a 538-residue protein sequence, read N- to C-terminus: Importin subunit alpha-6 (538 aa).

Positions Met-1–Ala-58 constitute an IBB domain. The disordered stretch occupies residues Met-1 to Leu-69. Positions Ala-7–Gln-46 are enriched in basic and acidic residues. Polar residues predominate over residues Ser-56–Leu-69. ARM repeat units follow at residues Asn-109–Ser-149, Ser-152–Gly-191, Pro-194–Arg-234, Lys-236–Asp-275, Asn-278–Thr-317, Asp-320–Ala-360, Thr-363–Ser-402, and His-406–Lys-445.

It belongs to the importin alpha family. In terms of assembly, forms a complex with importin subunit beta-1.

Its subcellular location is the nucleus envelope. Functionally, binds to conventional NLS motifs and mediates nuclear protein import across the nuclear envelope. Acts as a cellular receptor for the nuclear import of the virD2 protein of Agrobacterium, but is not essential for Agrobacterium-mediated root transformation. This is Importin subunit alpha-6 from Arabidopsis thaliana (Mouse-ear cress).